A 161-amino-acid chain; its full sequence is Disulfide bond formation protein B (161 aa).

Topologically, residues 1-8 are cytoplasmic; that stretch reads MQANSRAY. A helical transmembrane segment spans residues 9-25; it reads FLLIALVSFGLVGVALY. Residues 26–43 lie on the Periplasmic side of the membrane; sequence LQFEKGYQPCPLCVMQRF. A disulfide bridge connects residues cysteine 35 and cysteine 38. The chain crosses the membrane as a helical span at residues 44 to 58; that stretch reads AFIGIGIFSLLAAVA. The Cytoplasmic portion of the chain corresponds to 59–63; it reads QNTRS. Residues 64–81 traverse the membrane as a helical segment; sequence LWQGLGMLSGIAGIAVAV. The Periplasmic segment spans residues 82 to 136; the sequence is YHVSLLLNPKASCGIDPLENWVNALPTAKALPQVFYADGLCTAPLPPVLGLSVPA. A disulfide bridge links cysteine 94 with cysteine 122. The helical transmembrane segment at 137 to 155 threads the bilayer; it reads WSLIWLFILTLTLAVGLIR. Residues 156–161 lie on the Cytoplasmic side of the membrane; sequence REKNFR.

It belongs to the DsbB family.

It is found in the cell inner membrane. Required for disulfide bond formation in some periplasmic proteins. Acts by oxidizing the DsbA protein. The protein is Disulfide bond formation protein B of Cupriavidus necator (strain ATCC 17699 / DSM 428 / KCTC 22496 / NCIMB 10442 / H16 / Stanier 337) (Ralstonia eutropha).